The chain runs to 907 residues: Glutamate receptor 1 (907 aa).

The signal sequence occupies residues 1–18 (MPYIFAFFCTGFLGAVVG). The Extracellular portion of the chain corresponds to 19–536 (ANFPNNIQIG…GVFSFLDPLA (518 aa)). N-linked (GlcNAc...) asparagine glycans are attached at residues Asn63, Asn249, Asn257, Asn363, Asn401, and Asn406. The cysteines at positions 75 and 323 are disulfide-linked. 3 residues coordinate L-glutamate: Pro492, Thr494, and Arg499. The chain crosses the membrane as a helical span at residues 537-557 (YEIWMCIVFAYIGVSVVLFLV). The Cytoplasmic portion of the chain corresponds to 558-584 (SRFSPYEWHSEEFEEGRDQTTSDQSNE). The segment at residues 585–600 (FGIFNSLWFSLGAFMQ) is an intramembrane region (helical; Pore-forming). An intramembrane segment occupies 601–603 (QGC). A lipid anchor (S-palmitoyl cysteine) is attached at Cys603. At 604–609 (DISPRS) the chain is on the cytoplasmic side. The chain crosses the membrane as a helical span at residues 610 to 630 (LSGRIVGGVWWFFTLIIISSY). Residues 631 to 805 (TANLAAFLTV…DKTSALSLSN (175 aa)) lie on the Extracellular side of the membrane. Residue Ser645 is modified to Phosphoserine. L-glutamate is bound by residues Ser668 and Thr669. Phosphoserine is present on Ser710. Residue Glu719 participates in L-glutamate binding. Residues Cys732 and Cys787 are joined by a disulfide bond. A helical transmembrane segment spans residues 806–826 (VAGVFYILIGGLGLAMLVALI). The Cytoplasmic portion of the chain corresponds to 827 to 907 (EFCYKSRSES…SGMPLGATGL (81 aa)). Cys829 carries the S-palmitoyl cysteine lipid modification. Ser849 and Ser863 each carry phosphoserine. Residues 857–881 (STLPRNSGAGASGGSGSGENGRVVS) form a disordered region. The span at 866–875 (GASGGSGSGE) shows a compositional bias: gly residues. The PDZ-binding motif lies at 904-907 (ATGL).

It belongs to the glutamate-gated ion channel (TC 1.A.10.1) family. GRIA1 subfamily. In terms of assembly, homotetramer or heterotetramer of pore-forming glutamate receptor subunits. Heteromeric assembly can be the result of both receptor subtype and flip or flop form and according the composition, one partner can be dominant with respect to the fast desensitizing current component, whereas the other can determine the steady-state component. Tetramers may be formed by the dimerization of dimers. Found in a complex with GRIA2, GRIA3, GRIA4, CNIH2, CNIH3, CACNG2, CACNG3, CACNG4, CACNG5, CACNG7 and CACNG8. Interacts with HIP1 and RASGRF2. Interacts with SYNDIG1 and GRIA2. Interacts with DLG1 (via C-terminus). Interacts with LRFN1. Interacts with PRKG2. Interacts with CNIH2 and CACNG2. Interacts with CACNG5; this interaction modulates the gating. Interacts (via C-terminus) with PDLIM4 (via LIM domain); this interaction as well as the interaction of PDLIM4 with alpha-actinin is required for their colocalization in early endosomes. Interacts with SNX27 (via PDZ domain); the interaction is required for recycling to the plasma membrane when endocytosed and prevent degradation in lysosomes. Interacts (via PDZ-binding motif) with SHANK3 (via PDZ domain). Interacts with CACNG3; associates GRIA1 with the adapter protein complex 4 (AP-4) to target GRIA1 to the somatodendritic compartment of neurons. Interacts with CACNG2; this interaction mediates traffick to the plasma membrane and modulation of desensitization. Interacts with CNIH2 and CNIH3; this interaction promotes expression at the plasma membrane and extensively modulates their gating properties by slowing deactivation and desensitization kinetics. Found in a complex with GRIA2, GRIA3, GRIA4, DLG4, CACNG8 and CNIH2. In terms of processing, phosphorylated at Ser-645. Phosphorylated at Ser-710 by PKC. Phosphorylated at Ser-849 by PKC, PKA and CAMK2. Phosphorylated at Ser-863 by PKC, PKA and PRKG2. Phosphorylation of Ser-863 is reduced by induction of long-term depression and increased by induction of long-term potentiation. Palmitoylated. Depalmitoylated by CPT1C and upon L-glutamate stimulation. ZDHHC3/GODZ specifically palmitoylates Cys-603, which leads to Golgi retention and decreased cell surface expression. In contrast, Cys-829 palmitoylation does not affect cell surface expression but regulates stimulation-dependent endocytosis. Expressed in the outer plexiform layer of the retina of the eye (at protein level). Expressed in the forebrain and hippocampus (at protein level).

It is found in the cell membrane. It localises to the endoplasmic reticulum membrane. The protein localises to the postsynaptic cell membrane. The protein resides in the postsynaptic density membrane. Its subcellular location is the cell projection. It is found in the dendrite. It localises to the dendritic spine. The protein localises to the early endosome membrane. The protein resides in the recycling endosome membrane. Its subcellular location is the presynapse. It is found in the synapse. It catalyses the reaction Ca(2+)(in) = Ca(2+)(out). The enzyme catalyses Na(+)(in) = Na(+)(out). The catalysed reaction is Mg(2+)(in) = Mg(2+)(out). It carries out the reaction Li(+)(in) = Li(+)(out). It catalyses the reaction K(+)(in) = K(+)(out). The enzyme catalyses Sr(2+)(in) = Sr(2+)(out). Functionally, ionotropic glutamate receptor that functions as a ligand-gated cation channel, gated by L-glutamate and glutamatergic agonists such as alpha-amino-3-hydroxy-5-methyl-4-isoxazolepropionic acid (AMPA), quisqualic acid, and kainic acid. L-glutamate acts as an excitatory neurotransmitter at many synapses in the central nervous system. Binding of the excitatory neurotransmitter L-glutamate induces a conformation change, leading to the opening of the cation channel, and thereby converts the chemical signal to an electrical impulse upon entry of monovalent and divalent cations such as sodium and calcium. The receptor then desensitizes rapidly and enters in a transient inactive state, characterized by the presence of bound agonist. In the presence of CACNG2 or CACNG4 or CACNG7 or CACNG8, shows resensitization which is characterized by a delayed accumulation of current flux upon continued application of L-glutamate. Calcium (Ca(2+)) permeability depends on subunits composition and, heteromeric channels containing edited GRIA2 subunit are calcium-impermeable. Also permeable to other divalents cations such as strontium(2+) and magnesium(2+) and monovalent cations such as potassium(1+) and lithium(1+). This is Glutamate receptor 1 from Mus musculus (Mouse).